Consider the following 135-residue polypeptide: Flagellar assembly factor FliW 1 (135 aa).

It belongs to the FliW family. Interacts with translational regulator CsrA and flagellin(s).

It is found in the cytoplasm. Functionally, acts as an anti-CsrA protein, binds CsrA and prevents it from repressing translation of its target genes, one of which is flagellin. Binds to flagellin and participates in the assembly of the flagellum. This is Flagellar assembly factor FliW 1 from Helicobacter pylori (strain ATCC 700392 / 26695) (Campylobacter pylori).